Consider the following 742-residue polypeptide: Envelope glycoprotein H (742 aa).

A signal peptide spans 1-29 (MRPGLPSYLIVLAVCLLSHLLSSRYGAEA). Over 30-719 (ISEPLDKAFH…VVDATDSRLL (690 aa)) the chain is Virion surface. Residues Asn-55, Asn-62, Asn-67, and Asn-192 are each glycosylated (N-linked (GlcNAc...) asparagine; by host). Residues 217–280 (YLIDELRYVK…QTEKHELLVL (64 aa)) form an interaction with gL region. N-linked (GlcNAc...) asparagine; by host glycans are attached at residues Asn-641 and Asn-700. Residues 720–740 (MMSVYALSAIIGIYLLYRMLK) traverse the membrane as a helical segment. The Intravirion segment spans residues 741–742 (TC).

This sequence belongs to the herpesviridae glycoprotein H family. As to quaternary structure, interacts with glycoprotein L (gL); this interaction is necessary for the correct processing and cell surface expression of gH. The heterodimer gH/gL seems to interact with gB trimers during fusion. Forms the envelope pentamer complex (PC) composed of gH, gL, UL128, UL130, and UL131A. The pentamer interacts with host NRP2. Forms the envelope trimer complex composed of gH, gL, and gO. The trimer interacts with host PDGFRA. The trimer also interacts with host EPHA2. Post-translationally, N-glycosylated, O-glycosylated, and sialylated.

The protein localises to the virion membrane. It localises to the host cell membrane. The protein resides in the host endosome membrane. The heterodimer glycoprotein H-glycoprotein L is required for the fusion of viral and plasma membranes leading to virus entry into the host cell. Following initial binding to host receptor, membrane fusion is mediated by the fusion machinery composed of gB and the heterodimer gH/gL. May also be involved in the fusion between the virion envelope and the outer nuclear membrane during virion morphogenesis. In human cytomegalovirus, forms two distincts complexes to mediate viral entry, a trimer and a pentamer at the surface of the virion envelope. The gH-gL-gO trimer is required for infection in fibroblasts by interacting with host PDGFRA, and in glioblastoma cells by interacting with host EPHA2. The gH-gL-UL128-UL130-UL131A pentamer is essential for viral entry in epithelial, endothelial and myeloid cells via interaction with host NRP2. The polypeptide is Envelope glycoprotein H (Human cytomegalovirus (strain Towne) (HHV-5)).